The primary structure comprises 234 residues: Sugar fermentation stimulation protein A (234 aa).

The H-T-H motif DNA-binding region spans 201–220 (LLSEAQQRGVEILAYKAEIS).

It belongs to the SfsA family.

In terms of biological role, binds to DNA non-specifically. Could be a regulatory factor involved in maltose metabolism. This Shigella sonnei (strain Ss046) protein is Sugar fermentation stimulation protein A.